The primary structure comprises 512 residues: Tyrosine-protein kinase Lyn (512 aa).

Positions 1–50 (MGCIKSKRKDNLNDDGVDMKTQPVRNTDRTIYVRDPTSNKQQRPVPESQL) are disordered. The N-myristoyl glycine moiety is linked to residue Gly-2. Cys-3 carries S-palmitoyl cysteine lipidation. The 61-residue stretch at 63-123 (EQGDIVVALY…PSNYVAKVNT (61 aa)) folds into the SH3 domain. Residues 129 to 226 (WFFKDITRKD…GLCRRLEKAC (98 aa)) enclose the SH2 domain. Tyr-193 carries the post-translational modification Phosphotyrosine. Ser-228 carries the phosphoserine modification. The Protein kinase domain occupies 247–501 (IKLVKKLGAG…YLQSVLDDFY (255 aa)). ATP contacts are provided by residues 253–261 (LGAGQFGEV) and Lys-275. Residues Tyr-306 and Tyr-316 each carry the phosphotyrosine modification. Asp-367 (proton acceptor) is an active-site residue. Tyr-397 bears the Phosphotyrosine; by autocatalysis mark. A phosphotyrosine mark is found at Tyr-460 and Tyr-473. The residue at position 508 (Tyr-508) is a Phosphotyrosine; by autocatalysis, CSK and MATK.

The protein belongs to the protein kinase superfamily. Tyr protein kinase family. SRC subfamily. As to quaternary structure, interacts with TEC. Interacts (via SH2 domain) with FLT3 (tyrosine phosphorylated). Interacts with LIME1 and with CD79A upon activation of the B-cell antigen receptor. Interacts with the B-cell receptor complex. Interacts with phosphorylated THEMIS2. Interacts with EPOR. Interacts with MS4A2/FCER1B. Interaction (via the SH2 and SH3 domains) with MUC1 is stimulated by IL7 and the subsequent phosphorylation increases the binding between MUC1 and CTNNB1/beta-catenin. Interacts with ADAM15. Interacts with NDFIP2 and more weakly with NDFIP1. Interacts with FASLG. Interacts with KIT. Interacts with HCLS1. Interacts with FCGR2B. Interacts with FCGR1A; the interaction may be indirect. Interacts with CD19, CD22, CD79A and CD79B. Interacts (via SH3 domain) with CBLC, PPP1R15A and PDE4A. Interacts with TGFB1I1. Interacts (via SH3 domain) with PIK3R1, the regulatory subunit of phosphatidylinositol 3-kinase; this interaction enhances phosphatidylinositol 3-kinase activity. Interacts with CSF2RB, the common subunit of the IL3, IL5 and CSF2 receptors. Interacts with PAG1; identified in a complex with PAG1 and STAT3. Interacts with ABL1. Interacts with PTPN6/SHP-1. Interacts (via SH3 domain) with SCIMP (via proline-rich region). This interaction facilitates the phosphorylation of SCIMP 'Tyr-96', which enhances binding of SCIMP to TLR4, and consequently the phosphorylation of TLR4 in response to stimulation by lipopolysaccharide in macrophages. Interacts with LPXN (via LD motif 3) and the interaction is induced upon B-cell antigen receptor (BCR) activation. Interacts (via SH3-domain) with ANKRD54 (via ankyrin repeat region) in an activation-independent status of LYN. Forms a multiprotein complex with ANKRD54 and HCLS1. Interacts (via SH2 and SH3 domains) with UNC119; leading to LYN activation. Interacts with CD36. Interacts with LYN. Interacts with SKAP1 and FYB1; this interaction promotes the phosphorylation of CLNK. Interacts with BCAR1/CAS and NEDD9/HEF1. Ubiquitinated. Ubiquitination is SH3-dependent. Post-translationally, autophosphorylated. Phosphorylated on tyrosine residues in response to KIT signaling. Phosphorylation at Tyr-397 is required for optimal activity. Phosphorylation at Tyr-508 inhibits kinase activity. Phosphorylated at Tyr-508 by CSK. Dephosphorylated by PTPRC/CD45. Becomes rapidly phosphorylated upon activation of the B-cell receptor and the immunoglobulin receptor FCGR1A. Phosphorylated in response to integrin ITGB1 in B-cells. In terms of tissue distribution, detected in spleen (at protein level). Expressed predominantly in B-lymphoid and myeloid cells.

The protein resides in the cell membrane. It localises to the nucleus. Its subcellular location is the cytoplasm. It is found in the perinuclear region. The protein localises to the golgi apparatus. The protein resides in the membrane. The catalysed reaction is L-tyrosyl-[protein] + ATP = O-phospho-L-tyrosyl-[protein] + ADP + H(+). Its activity is regulated as follows. Subject to autoinhibition, mediated by intramolecular interactions between the SH2 domain and the C-terminal phosphotyrosine. Phosphorylation at Tyr-397 is required for optimal activity. Phosphorylated by CSK at Tyr-508; phosphorylation at Tyr-508 inhibits kinase activity. Kinase activity is modulated by dephosphorylation by PTPRC/CD45. In terms of biological role, non-receptor tyrosine-protein kinase that transmits signals from cell surface receptors and plays an important role in the regulation of innate and adaptive immune responses, hematopoiesis, responses to growth factors and cytokines, integrin signaling, but also responses to DNA damage and genotoxic agents. Functions primarily as negative regulator, but can also function as activator, depending on the context. Required for the initiation of the B-cell response, but also for its down-regulation and termination. Plays an important role in the regulation of B-cell differentiation, proliferation, survival and apoptosis, and is important for immune self-tolerance. Acts downstream of several immune receptors, including the B-cell receptor, CD79A, CD79B, CD5, CD19, CD22, FCER1, FCGR2, FCGR1A, TLR2 and TLR4. Plays a role in the inflammatory response to bacterial lipopolysaccharide. Mediates the responses to cytokines and growth factors in hematopoietic progenitors, platelets, erythrocytes, and in mature myeloid cells, such as dendritic cells, neutrophils and eosinophils. Acts downstream of EPOR, KIT, MPL, the chemokine receptor CXCR4, as well as the receptors for IL3, IL5 and CSF2. Plays an important role in integrin signaling. Regulates cell proliferation, survival, differentiation, migration, adhesion, degranulation, and cytokine release. Involved in the regulation of endothelial activation, neutrophil adhesion and transendothelial migration. Down-regulates signaling pathways by phosphorylation of immunoreceptor tyrosine-based inhibitory motifs (ITIM), that then serve as binding sites for phosphatases, such as PTPN6/SHP-1, PTPN11/SHP-2 and INPP5D/SHIP-1, that modulate signaling by dephosphorylation of kinases and their substrates. Phosphorylates LIME1 in response to CD22 activation. Phosphorylates BTK, CBL, CD5, CD19, CD72, CD79A, CD79B, CSF2RB, DOK1, HCLS1, LILRB3/PIR-B, MS4A2/FCER1B, SYK and TEC. Promotes phosphorylation of SIRPA, PTPN6/SHP-1, PTPN11/SHP-2 and INPP5D/SHIP-1. Required for rapid phosphorylation of FER in response to FCER1 activation. Mediates KIT phosphorylation. Acts as an effector of EPOR (erythropoietin receptor) in controlling KIT expression and may play a role in erythroid differentiation during the switch between proliferation and maturation. Depending on the context, activates or inhibits several signaling cascades. Regulates phosphatidylinositol 3-kinase activity and AKT1 activation. Regulates activation of the MAP kinase signaling cascade, including activation of MAP2K1/MEK1, MAPK1/ERK2, MAPK3/ERK1, MAPK8/JNK1 and MAPK9/JNK2. Mediates activation of STAT5A and/or STAT5B. Phosphorylates LPXN on 'Tyr-72'. Kinase activity facilitates TLR4-TLR6 heterodimerization and signal initiation. Phosphorylates SCIMP on 'Tyr-96'; this enhances binding of SCIMP to TLR4, promoting the phosphorylation of TLR4, and a selective cytokine response to lipopolysaccharide in macrophages. Phosphorylates CLNK. Phosphorylates BCAR1/CAS and NEDD9/HEF1. The chain is Tyrosine-protein kinase Lyn (Lyn) from Rattus norvegicus (Rat).